Here is a 130-residue protein sequence, read N- to C-terminus: Small ribosomal subunit protein uS9 (130 aa).

Belongs to the universal ribosomal protein uS9 family.

The polypeptide is Small ribosomal subunit protein uS9 (Stenotrophomonas maltophilia (strain R551-3)).